The primary structure comprises 398 residues: tRNA-specific 2-thiouridylase MnmA (398 aa).

Residues 18-25 and Leu44 contribute to the ATP site; that span reads AMSGGVDS. Residue Cys112 is the Nucleophile of the active site. A disulfide bond links Cys112 and Cys213. Residue Gly136 coordinates ATP. The segment at 163–165 is interaction with tRNA; it reads RDQ. Cys213 serves as the catalytic Cysteine persulfide intermediate.

The protein belongs to the MnmA/TRMU family.

Its subcellular location is the cytoplasm. The catalysed reaction is S-sulfanyl-L-cysteinyl-[protein] + uridine(34) in tRNA + AH2 + ATP = 2-thiouridine(34) in tRNA + L-cysteinyl-[protein] + A + AMP + diphosphate + H(+). Catalyzes the 2-thiolation of uridine at the wobble position (U34) of tRNA, leading to the formation of s(2)U34. This chain is tRNA-specific 2-thiouridylase MnmA, found in Sinorhizobium medicae (strain WSM419) (Ensifer medicae).